Here is a 334-residue protein sequence, read N- to C-terminus: Ketol-acid reductoisomerase (NADP(+)) (334 aa).

The region spanning 3–183 (ATIYYENDAD…GGTRGGVIET (181 aa)) is the KARI N-terminal Rossmann domain. NADP(+) is bound by residues 26–29 (YGSQ), R49, S52, and 84–87 (DEVQ). H109 is an active-site residue. An NADP(+)-binding site is contributed by G135. In terms of domain architecture, KARI C-terminal knotted spans 184–329 (TFAEETETDL…LGLRRMMNWI (146 aa)). Mg(2+)-binding residues include D192, E196, E228, and E232. S253 lines the substrate pocket.

It belongs to the ketol-acid reductoisomerase family. Mg(2+) is required as a cofactor.

It catalyses the reaction (2R)-2,3-dihydroxy-3-methylbutanoate + NADP(+) = (2S)-2-acetolactate + NADPH + H(+). The enzyme catalyses (2R,3R)-2,3-dihydroxy-3-methylpentanoate + NADP(+) = (S)-2-ethyl-2-hydroxy-3-oxobutanoate + NADPH + H(+). It functions in the pathway amino-acid biosynthesis; L-isoleucine biosynthesis; L-isoleucine from 2-oxobutanoate: step 2/4. Its pathway is amino-acid biosynthesis; L-valine biosynthesis; L-valine from pyruvate: step 2/4. Functionally, involved in the biosynthesis of branched-chain amino acids (BCAA). Catalyzes an alkyl-migration followed by a ketol-acid reduction of (S)-2-acetolactate (S2AL) to yield (R)-2,3-dihydroxy-isovalerate. In the isomerase reaction, S2AL is rearranged via a Mg-dependent methyl migration to produce 3-hydroxy-3-methyl-2-ketobutyrate (HMKB). In the reductase reaction, this 2-ketoacid undergoes a metal-dependent reduction by NADPH to yield (R)-2,3-dihydroxy-isovalerate. This is Ketol-acid reductoisomerase (NADP(+)) from Rhodopirellula baltica (strain DSM 10527 / NCIMB 13988 / SH1).